A 58-amino-acid polypeptide reads, in one-letter code: UPF0337 protein CE1672 (58 aa).

Residues 1-39 (MGLGDKIRNTAEKASGKVKEATGKATDNEKLEAEGKTDQ) show a composition bias toward basic and acidic residues. The interval 1-58 (MGLGDKIRNTAEKASGKVKEATGKATDNEKLEAEGKTDQFKGNAKNTVENAKDTLRGN) is disordered.

It belongs to the UPF0337 (CsbD) family.

This Corynebacterium efficiens (strain DSM 44549 / YS-314 / AJ 12310 / JCM 11189 / NBRC 100395) protein is UPF0337 protein CE1672.